The chain runs to 529 residues: Isoleucine--tRNA ligase (529 aa).

Glutamate 482 is a binding site for L-isoleucyl-5'-AMP. The 'KMSKS' region signature appears at 523-527 (KMSKS). Position 526 (lysine 526) interacts with ATP.

This sequence belongs to the class-I aminoacyl-tRNA synthetase family. IleS type 1 subfamily. As to quaternary structure, monomer.

The protein resides in the cytoplasm. The catalysed reaction is tRNA(Ile) + L-isoleucine + ATP = L-isoleucyl-tRNA(Ile) + AMP + diphosphate. Catalyzes the attachment of isoleucine to tRNA(Ile). As IleRS can inadvertently accommodate and process structurally similar amino acids such as valine, to avoid such errors it has two additional distinct tRNA(Ile)-dependent editing activities. One activity is designated as 'pretransfer' editing and involves the hydrolysis of activated Val-AMP. The other activity is designated 'posttransfer' editing and involves deacylation of mischarged Val-tRNA(Ile). The polypeptide is Isoleucine--tRNA ligase (ileS) (Aquifex pyrophilus).